The sequence spans 262 residues: Sepiapterin reductase (262 aa).

Met-1 is modified (N-acetylmethionine). 15 to 21 (GASRGFG) lines the NADP(+) pocket. At Ser-33 the chain carries Phosphoserine. Residue 43 to 44 (RS) coordinates NADP(+). Residue Ser-46 is modified to Phosphoserine; by CaMK2; in vitro. An NADP(+)-binding site is contributed by 70-71 (DL). Residues 158-159 (SL) and Tyr-171 contribute to the substrate site. Residue Lys-175 participates in NADP(+) binding. Ser-196 carries the phosphoserine; by CaMK2; in vitro modification. Gly-200 contributes to the substrate binding site. Residue 202-207 (LDTNMQ) participates in NADP(+) binding. Ser-214 carries the post-translational modification Phosphoserine; by CaMK2; in vitro. Asp-258 lines the substrate pocket.

It belongs to the sepiapterin reductase family. As to quaternary structure, homodimer. In terms of processing, in vitro phosphorylation of Ser-46, Ser-196 and Ser-214 by CaMK2 does not change kinetic parameters.

Its subcellular location is the cytoplasm. The catalysed reaction is L-erythro-7,8-dihydrobiopterin + NADP(+) = L-sepiapterin + NADPH + H(+). The enzyme catalyses (6R)-L-erythro-5,6,7,8-tetrahydrobiopterin + 2 NADP(+) = 6-pyruvoyl-5,6,7,8-tetrahydropterin + 2 NADPH + 2 H(+). In terms of biological role, catalyzes the final one or two reductions in tetra-hydrobiopterin biosynthesis to form 5,6,7,8-tetrahydrobiopterin. This chain is Sepiapterin reductase (Spr), found in Rattus norvegicus (Rat).